We begin with the raw amino-acid sequence, 195 residues long: Nucleoside triphosphate pyrophosphatase (195 aa).

The Proton acceptor role is filled by D76.

This sequence belongs to the Maf family. Requires a divalent metal cation as cofactor.

The protein localises to the cytoplasm. It catalyses the reaction a ribonucleoside 5'-triphosphate + H2O = a ribonucleoside 5'-phosphate + diphosphate + H(+). The enzyme catalyses a 2'-deoxyribonucleoside 5'-triphosphate + H2O = a 2'-deoxyribonucleoside 5'-phosphate + diphosphate + H(+). In terms of biological role, nucleoside triphosphate pyrophosphatase. May have a dual role in cell division arrest and in preventing the incorporation of modified nucleotides into cellular nucleic acids. The protein is Nucleoside triphosphate pyrophosphatase of Pelagibacter ubique (strain HTCC1062).